The following is a 362-amino-acid chain: Phosphoserine aminotransferase (362 aa).

Serine 9 and arginine 42 together coordinate L-glutamate. Residues 76–77 (GR), tryptophan 102, threonine 153, aspartate 174, and glutamine 197 contribute to the pyridoxal 5'-phosphate site. Lysine 198 is subject to N6-(pyridoxal phosphate)lysine. 239 to 240 (NT) lines the pyridoxal 5'-phosphate pocket.

Belongs to the class-V pyridoxal-phosphate-dependent aminotransferase family. SerC subfamily. In terms of assembly, homodimer. It depends on pyridoxal 5'-phosphate as a cofactor.

The protein resides in the cytoplasm. The catalysed reaction is O-phospho-L-serine + 2-oxoglutarate = 3-phosphooxypyruvate + L-glutamate. It catalyses the reaction 4-(phosphooxy)-L-threonine + 2-oxoglutarate = (R)-3-hydroxy-2-oxo-4-phosphooxybutanoate + L-glutamate. It participates in amino-acid biosynthesis; L-serine biosynthesis; L-serine from 3-phospho-D-glycerate: step 2/3. Its pathway is cofactor biosynthesis; pyridoxine 5'-phosphate biosynthesis; pyridoxine 5'-phosphate from D-erythrose 4-phosphate: step 3/5. In terms of biological role, catalyzes the reversible conversion of 3-phosphohydroxypyruvate to phosphoserine and of 3-hydroxy-2-oxo-4-phosphonooxybutanoate to phosphohydroxythreonine. The polypeptide is Phosphoserine aminotransferase (Salmonella newport (strain SL254)).